The chain runs to 503 residues: Pentatricopeptide repeat-containing protein At2g30100, chloroplastic (503 aa).

A chloroplast-targeting transit peptide spans 1–50 (MAYAHVFASLTISTISLRRFLPRLHRNHSVKPNSRIICNLKLNYSAGKFR). PPR repeat units follow at residues 341–375 (IGVV…GREP), 376–410 (EADL…GSQR), and 411–445 (KKKT…GLHP).

The protein belongs to the PPR family. P subfamily.

The protein resides in the plastid. Its subcellular location is the chloroplast. The chain is Pentatricopeptide repeat-containing protein At2g30100, chloroplastic from Arabidopsis thaliana (Mouse-ear cress).